The primary structure comprises 219 residues: Flagellar biosynthetic protein FliZ (219 aa).

The first 26 residues, 1–26 (MKKSQYFIVFICFFVLFSVHPIAAAA), serve as a signal peptide directing secretion. The span at 41–61 (KDEKTADQSEQKKEKTTKTAD) shows a compositional bias: basic and acidic residues. Residues 41 to 62 (KDEKTADQSEQKKEKTTKTADE) form a disordered region. The helical transmembrane segment at 71 to 96 (VSAFDFVKMIFALLFVIVLIYGLVKL) threads the bilayer. Over residues 200–212 (LEELKQNRSEGKK) the composition is skewed to basic and acidic residues. Positions 200–219 (LEELKQNRSEGKKKGPRHHE) are disordered.

It is found in the cell membrane. May be a structural component of the flagellum that anchors the rod to the membrane. The protein is Flagellar biosynthetic protein FliZ (fliZ) of Bacillus subtilis (strain 168).